We begin with the raw amino-acid sequence, 85 residues long: Large ribosomal subunit protein bL31B (85 aa).

This sequence belongs to the bacterial ribosomal protein bL31 family. Type B subfamily. As to quaternary structure, part of the 50S ribosomal subunit.

This chain is Large ribosomal subunit protein bL31B, found in Staphylococcus epidermidis (strain ATCC 35984 / DSM 28319 / BCRC 17069 / CCUG 31568 / BM 3577 / RP62A).